The sequence spans 379 residues: Lipoyl synthase, mitochondrial (379 aa).

[4Fe-4S] cluster is bound by residues Cys106, Cys111, Cys117, Cys137, Cys141, Cys144, and Ser352. The 220-residue stretch at 122-341 folds into the Radical SAM core domain; sequence EHGTQTATIM…EERGNALGFL (220 aa).

This sequence belongs to the radical SAM superfamily. Lipoyl synthase family. The cofactor is [4Fe-4S] cluster.

The protein localises to the mitochondrion. It carries out the reaction [[Fe-S] cluster scaffold protein carrying a second [4Fe-4S](2+) cluster] + N(6)-octanoyl-L-lysyl-[protein] + 2 oxidized [2Fe-2S]-[ferredoxin] + 2 S-adenosyl-L-methionine + 4 H(+) = [[Fe-S] cluster scaffold protein] + N(6)-[(R)-dihydrolipoyl]-L-lysyl-[protein] + 4 Fe(3+) + 2 hydrogen sulfide + 2 5'-deoxyadenosine + 2 L-methionine + 2 reduced [2Fe-2S]-[ferredoxin]. It participates in protein modification; protein lipoylation via endogenous pathway; protein N(6)-(lipoyl)lysine from octanoyl-[acyl-carrier-protein]: step 2/2. In terms of biological role, catalyzes the radical-mediated insertion of two sulfur atoms into the C-6 and C-8 positions of the octanoyl moiety bound to the lipoyl domains of lipoate-dependent enzymes, thereby converting the octanoylated domains into lipoylated derivatives. This Drosophila erecta (Fruit fly) protein is Lipoyl synthase, mitochondrial.